A 59-amino-acid polypeptide reads, in one-letter code: Putative potassium channel toxin Ts24 (59 aa).

Positions 1-22 are cleaved as a signal peptide; the sequence is MKAFYGILIIFILISMIHLSQQ. 3 cysteine pairs are disulfide-bonded: cysteine 29-cysteine 50, cysteine 35-cysteine 55, and cysteine 39-cysteine 57.

It belongs to the short scorpion toxin superfamily. Potassium channel inhibitor family. Alpha-KTx 04 subfamily. As to expression, expressed by the venom gland.

The protein localises to the secreted. In terms of biological role, potently blocks Kv1.1/KCNA1 (85%), Kv1.2/KCNA2 (91%), Kv1.3/KCNA3 (89%), Kv1.6/KCNA6 (94%), and Shaker (97%). This is Putative potassium channel toxin Ts24 from Tityus serrulatus (Brazilian scorpion).